A 353-amino-acid chain; its full sequence is MTAILERRESTSLWGRFCNWITSTENRLYIGWFGVLMIPTLLTATSVFIIAFIAAPPVDIDGIREPVSGSLLYGNNIISGAIIPTSAAIGLHFYPIWEAASVDEWLYNGGPYELIVLHFLLGVACYMGREWELSFRLGMRPWIAVAYSAPVAAATAVFLIYPIGQGSFSDGMPLGISGTFNFMIVFQAEHNILMHPFHMLGVAGVFGGSLFSAMHGSLVTSSLIRETTENESANEGYKFGQEEETYNIVAAHGYFGRLIFQYASFNNSRSLHFLLAAWPVVGIWFTALGISTMAFNLNGFNFNQSVVDSQGRVINTWADIINRANLGMEVMHERNAHNFPLDLAAVEAPSTNG.

Residue Thr2 is modified to N-acetylthreonine. A Phosphothreonine modification is found at Thr2. Transmembrane regions (helical) follow at residues 29–46 (YIGWFGVLMIPTLLTATS), 118–133 (HFLLGVACYMGREWEL), and 142–156 (WIAVAYSAPVAAATA). Position 118 (His118) interacts with chlorophyll a. Tyr126 serves as a coordination point for pheophytin a. [CaMn4O5] cluster is bound by residues Asp170 and Glu189. A helical transmembrane segment spans residues 197–218 (FHMLGVAGVFGGSLFSAMHGSL). Position 198 (His198) interacts with chlorophyll a. A quinone is bound by residues His215 and 264 to 265 (SF). His215 is a binding site for Fe cation. His272 contributes to the Fe cation binding site. Residues 274-288 (LLAAWPVVGIWFTAL) traverse the membrane as a helical segment. Residues His332, Glu333, Asp342, and Ala344 each coordinate [CaMn4O5] cluster. The propeptide occupies 345 to 353 (AVEAPSTNG).

The protein belongs to the reaction center PufL/M/PsbA/D family. As to quaternary structure, PSII is composed of 1 copy each of membrane proteins PsbA, PsbB, PsbC, PsbD, PsbE, PsbF, PsbH, PsbI, PsbJ, PsbK, PsbL, PsbM, PsbT, PsbX, PsbY, PsbZ, Psb30/Ycf12, at least 3 peripheral proteins of the oxygen-evolving complex and a large number of cofactors. It forms dimeric complexes. The cofactor is The D1/D2 heterodimer binds P680, chlorophylls that are the primary electron donor of PSII, and subsequent electron acceptors. It shares a non-heme iron and each subunit binds pheophytin, quinone, additional chlorophylls, carotenoids and lipids. D1 provides most of the ligands for the Mn4-Ca-O5 cluster of the oxygen-evolving complex (OEC). There is also a Cl(-1) ion associated with D1 and D2, which is required for oxygen evolution. The PSII complex binds additional chlorophylls, carotenoids and specific lipids.. In terms of processing, tyr-161 forms a radical intermediate that is referred to as redox-active TyrZ, YZ or Y-Z. C-terminally processed by CTPA; processing is essential to allow assembly of the oxygen-evolving complex and thus photosynthetic growth.

It is found in the plastid. The protein resides in the chloroplast thylakoid membrane. The catalysed reaction is 2 a plastoquinone + 4 hnu + 2 H2O = 2 a plastoquinol + O2. Functionally, photosystem II (PSII) is a light-driven water:plastoquinone oxidoreductase that uses light energy to abstract electrons from H(2)O, generating O(2) and a proton gradient subsequently used for ATP formation. It consists of a core antenna complex that captures photons, and an electron transfer chain that converts photonic excitation into a charge separation. The D1/D2 (PsbA/PsbD) reaction center heterodimer binds P680, the primary electron donor of PSII as well as several subsequent electron acceptors. In Dioscorea elephantipes (Elephant's foot yam), this protein is Photosystem II protein D1.